A 283-amino-acid chain; its full sequence is Co-chaperone protein DjlA (283 aa).

Residues 1–6 are Periplasmic-facing; sequence MQIFGK. The helical transmembrane segment at 7-30 threads the bilayer; the sequence is ILGGFFGFLFGGFFGAALGIFIGH. The Cytoplasmic portion of the chain corresponds to 31-283; the sequence is QFDKAKRMAN…DLIKKEKGIK (253 aa). Positions 188-197 are enriched in gly residues; it reads QGGGFSGHQS. Positions 188-210 are disordered; it reads QGGGFSGHQSGGSHQQGQWQQAS. The segment covering 198–210 has biased composition (low complexity); the sequence is GGSHQQGQWQQAS. The 67-residue stretch at 217-283 folds into the J domain; it reads DAYNLLGISE…DLIKKEKGIK (67 aa).

Homodimer.

It is found in the cell inner membrane. Its function is as follows. Regulatory DnaK co-chaperone. Direct interaction between DnaK and DjlA is needed for the induction of the wcaABCDE operon, involved in the synthesis of a colanic acid polysaccharide capsule, possibly through activation of the RcsB/RcsC phosphotransfer signaling pathway. The colanic acid capsule may help the bacterium survive conditions outside the host. The protein is Co-chaperone protein DjlA of Aliivibrio fischeri (strain ATCC 700601 / ES114) (Vibrio fischeri).